A 243-amino-acid chain; its full sequence is R-spondin-2 (243 aa).

The signal sequence occupies residues methionine 1–glycine 23. 11 disulfides stabilise this stretch: cysteine 40–cysteine 46, cysteine 43–cysteine 52, cysteine 55–cysteine 74, cysteine 78–cysteine 93, cysteine 96–cysteine 104, cysteine 101–cysteine 110, cysteine 113–cysteine 124, cysteine 128–cysteine 141, cysteine 145–cysteine 187, cysteine 156–cysteine 163, and cysteine 196–cysteine 203. The stretch at methionine 90–proline 134 is one FU repeat. The TSP type-1 domain maps to glycine 144–proline 204. The N-linked (GlcNAc...) asparagine glycan is linked to asparagine 160. Residues proline 204–leucine 224 are compositionally biased toward basic residues. The interval proline 204–glutamine 243 is disordered.

It belongs to the R-spondin family. Interacts with WNT1. Binds heparin. Interacts with LGR4, LGR5 and LGR6.

Its subcellular location is the secreted. Activator of the canonical Wnt signaling pathway by acting as a ligand for LGR4-6 receptors. Upon binding to LGR4-6 (LGR4, LGR5 or LGR6), LGR4-6 associate with phosphorylated LRP6 and frizzled receptors that are activated by extracellular Wnt receptors, triggering the canonical Wnt signaling pathway to increase expression of target genes. Also regulates the canonical Wnt/beta-catenin-dependent pathway and non-canonical Wnt signaling by acting as an inhibitor of ZNRF3, an important regulator of the Wnt signaling pathway. Probably also acts as a ligand for frizzled and LRP receptors. During embryonic development, plays a crucial role in limb specification, amplifying the Wnt signaling pathway independently of LGR4-6 receptors, possibly by acting as a direct antagonistic ligand to RNF43 and ZNRF3, hence governing the number of limbs an embryo should form. This Mus musculus (Mouse) protein is R-spondin-2 (Rspo2).